A 239-amino-acid chain; its full sequence is 3,4-dihydroxyphthalate decarboxylase (239 aa).

The Proton donor/acceptor role is filled by E84. Positions 84, 103, 105, and 171 each coordinate a divalent metal cation.

Belongs to the aldolase class II family. A divalent metal cation serves as cofactor.

The catalysed reaction is 3,4-dihydroxyphthalate + H(+) = 3,4-dihydroxybenzoate + CO2. It participates in xenobiotic degradation; phthalate degradation. Its function is as follows. Catalyzes the decarboxylation of 3,4-dihydroxyphthalate to protocatechuate (3,4-dihydroxybenzoate) during phthalate metabolism. The protein is 3,4-dihydroxyphthalate decarboxylase of Terrabacter sp. (strain DBF63).